A 232-amino-acid polypeptide reads, in one-letter code: Large ribosomal subunit protein uL1 (232 aa).

This sequence belongs to the universal ribosomal protein uL1 family. Part of the 50S ribosomal subunit.

Its function is as follows. Binds directly to 23S rRNA. The L1 stalk is quite mobile in the ribosome, and is involved in E site tRNA release. Protein L1 is also a translational repressor protein, it controls the translation of the L11 operon by binding to its mRNA. The chain is Large ribosomal subunit protein uL1 from Alkaliphilus oremlandii (strain OhILAs) (Clostridium oremlandii (strain OhILAs)).